A 434-amino-acid polypeptide reads, in one-letter code: Nicotinate phosphoribosyltransferase (434 aa).

A Phosphohistidine; by autocatalysis modification is found at His-242.

This sequence belongs to the NAPRTase family. Transiently phosphorylated on a His residue during the reaction cycle. Phosphorylation strongly increases the affinity for substrates and increases the rate of nicotinate D-ribonucleotide production. Dephosphorylation regenerates the low-affinity form of the enzyme, leading to product release.

The enzyme catalyses nicotinate + 5-phospho-alpha-D-ribose 1-diphosphate + ATP + H2O = nicotinate beta-D-ribonucleotide + ADP + phosphate + diphosphate. The protein operates within cofactor biosynthesis; NAD(+) biosynthesis; nicotinate D-ribonucleotide from nicotinate: step 1/1. Functionally, catalyzes the synthesis of beta-nicotinate D-ribonucleotide from nicotinate and 5-phospho-D-ribose 1-phosphate at the expense of ATP. The polypeptide is Nicotinate phosphoribosyltransferase (Sinorhizobium medicae (strain WSM419) (Ensifer medicae)).